Here is a 425-residue protein sequence, read N- to C-terminus: Serine--tRNA ligase (425 aa).

Position 230–232 (230–232) interacts with L-serine; it reads TAE. An ATP-binding site is contributed by 261 to 263; sequence RSE. E284 lines the L-serine pocket. An ATP-binding site is contributed by 348 to 351; the sequence is EISS. Position 384 (S384) interacts with L-serine.

It belongs to the class-II aminoacyl-tRNA synthetase family. Type-1 seryl-tRNA synthetase subfamily. As to quaternary structure, homodimer. The tRNA molecule binds across the dimer.

Its subcellular location is the cytoplasm. The enzyme catalyses tRNA(Ser) + L-serine + ATP = L-seryl-tRNA(Ser) + AMP + diphosphate + H(+). It catalyses the reaction tRNA(Sec) + L-serine + ATP = L-seryl-tRNA(Sec) + AMP + diphosphate + H(+). Its pathway is aminoacyl-tRNA biosynthesis; selenocysteinyl-tRNA(Sec) biosynthesis; L-seryl-tRNA(Sec) from L-serine and tRNA(Sec): step 1/1. Catalyzes the attachment of serine to tRNA(Ser). Is also able to aminoacylate tRNA(Sec) with serine, to form the misacylated tRNA L-seryl-tRNA(Sec), which will be further converted into selenocysteinyl-tRNA(Sec). This is Serine--tRNA ligase from Streptococcus equi subsp. zooepidemicus (strain H70).